We begin with the raw amino-acid sequence, 121 residues long: Large ribosomal subunit protein bL21c (121 aa).

The protein belongs to the bacterial ribosomal protein bL21 family. As to quaternary structure, part of the 50S ribosomal subunit.

The protein resides in the plastid. The protein localises to the chloroplast. Its function is as follows. This protein binds to 23S rRNA. This is Large ribosomal subunit protein bL21c from Chaetosphaeridium globosum (Charophycean green alga).